A 471-amino-acid polypeptide reads, in one-letter code: Glutamyl-tRNA(Gln) amidotransferase subunit A, mitochondrial (471 aa).

Residues K64 and S141 each act as charge relay system in the active site. Catalysis depends on S165, which acts as the Acyl-ester intermediate.

This sequence belongs to the amidase family. GatA subfamily. In terms of assembly, subunit of the heterotrimeric GatCAB amidotransferase (AdT) complex, composed of A, B and C subunits.

It is found in the mitochondrion. It catalyses the reaction L-glutamyl-tRNA(Gln) + L-glutamine + ATP + H2O = L-glutaminyl-tRNA(Gln) + L-glutamate + ADP + phosphate + H(+). In terms of biological role, allows the formation of correctly charged Gln-tRNA(Gln) through the transamidation of misacylated Glu-tRNA(Gln) in the mitochondria. The reaction takes place in the presence of glutamine and ATP through an activated gamma-phospho-Glu-tRNA(Gln). This is Glutamyl-tRNA(Gln) amidotransferase subunit A, mitochondrial from Schizosaccharomyces pombe (strain 972 / ATCC 24843) (Fission yeast).